The chain runs to 130 residues: uncharacterized protein (130 aa).

Met-1 is subject to N-acetylmethionine.

As to quaternary structure, homotetramer.

This is an uncharacterized protein from Arabidopsis thaliana (Mouse-ear cress).